A 398-amino-acid chain; its full sequence is Histidinol-phosphate aminotransferase (398 aa).

Residues 1–10 are compositionally biased toward polar residues; it reads MTGQRATPQP. The interval 1-30 is disordered; the sequence is MTGQRATPQPTLDDLPLRDDLRGKSPYGAP. At K234 the chain carries N6-(pyridoxal phosphate)lysine.

It belongs to the class-II pyridoxal-phosphate-dependent aminotransferase family. Histidinol-phosphate aminotransferase subfamily. As to quaternary structure, homodimer. Pyridoxal 5'-phosphate serves as cofactor.

It carries out the reaction L-histidinol phosphate + 2-oxoglutarate = 3-(imidazol-4-yl)-2-oxopropyl phosphate + L-glutamate. Its pathway is amino-acid biosynthesis; L-histidine biosynthesis; L-histidine from 5-phospho-alpha-D-ribose 1-diphosphate: step 7/9. The protein is Histidinol-phosphate aminotransferase of Mycolicibacterium paratuberculosis (strain ATCC BAA-968 / K-10) (Mycobacterium paratuberculosis).